Consider the following 208-residue polypeptide: Small ribosomal subunit protein uS4 (208 aa).

The segment at 30 to 49 is disordered; it reads KSALEKRPYPPGQHGQRRSK. An S4 RNA-binding domain is found at 98–161; sequence RRLDNVVYRM…KNNPQIQRSL (64 aa).

This sequence belongs to the universal ribosomal protein uS4 family. As to quaternary structure, part of the 30S ribosomal subunit. Contacts protein S5. The interaction surface between S4 and S5 is involved in control of translational fidelity.

Its function is as follows. One of the primary rRNA binding proteins, it binds directly to 16S rRNA where it nucleates assembly of the body of the 30S subunit. Functionally, with S5 and S12 plays an important role in translational accuracy. The polypeptide is Small ribosomal subunit protein uS4 (Nitratiruptor sp. (strain SB155-2)).